We begin with the raw amino-acid sequence, 370 residues long: Metalloproteinase (370 aa).

The N-terminal stretch at 1-15 (MYLAYIFFLFATVSA) is a signal peptide. Residues 170–370 (IVIEVLLVTD…DNYGKIFRMF (201 aa)) enclose the Peptidase M12B domain. An N-linked (GalNAc...) asparagine glycan is attached at N226. H320 contributes to the Zn(2+) binding site. Residue E321 is part of the active site. Positions 324 and 330 each coordinate Zn(2+).

It belongs to the venom metalloproteinase (M12B) family. As to expression, expressed by the venom gland.

The protein resides in the secreted. Functionally, metalloprotease that may disrupt the cell matrix and the process of clotting blood or hemolymph. The chain is Metalloproteinase from Tityus obscurus (Amazonian scorpion).